The following is a 3354-amino-acid chain: Cadherin-23 (3354 aa).

Positions Met-1–Gly-23 are cleaved as a signal peptide. Topologically, residues Gln-24–Ala-3064 are extracellular. 27 consecutive Cadherin domains span residues His-34 to Phe-132, His-133 to Phe-236, Ile-237 to Phe-348, Asn-349 to Phe-460, Ser-461 to Phe-561, Gln-562 to Phe-671, Ser-672 to Tyr-784, Lys-779 to Phe-890, Arg-891 to Phe-995, Phe-996 to Phe-1102, Leu-1103 to Phe-1208, Gln-1210 to Phe-1313, Ser-1314 to Phe-1418, Phe-1420 to Ile-1527, Ser-1529 to Phe-1634, Gln-1635 to Phe-1744, Pro-1745 to Leu-1851, Leu-1852 to Phe-1959, Thr-1960 to Phe-2069, Ser-2070 to Phe-2174, Leu-2175 to Phe-2293, Gly-2297 to Phe-2402, Asp-2403 to Phe-2509, Ser-2510 to Phe-2611, Pro-2614 to Phe-2722, Ser-2729 to Phe-2846, and Thr-2847 to Phe-2975. N-linked (GlcNAc...) asparagine glycosylation is found at Asn-155 and Asn-206. N-linked (GlcNAc...) asparagine glycosylation is found at Asn-349, Asn-393, Asn-434, Asn-466, Asn-472, Asn-602, Asn-694, Asn-765, Asn-810, Asn-827, Asn-941, Asn-1001, Asn-1018, Asn-1171, Asn-1282, Asn-1315, Asn-1473, Asn-1534, Asn-1651, Asn-1667, Asn-1818, Asn-1857, Asn-1889, Asn-1902, Asn-2014, Asn-2050, Asn-2129, Asn-2168, Asn-2195, Asn-2263, Asn-2357, and Asn-2369. Asn-2578, Asn-2616, Asn-2749, Asn-2808, Asn-2877, Asn-2896, Asn-2941, and Asn-2981 each carry an N-linked (GlcNAc...) asparagine glycan. A helical membrane pass occupies residues Leu-3065–Leu-3085. Topologically, residues Met-3086–Leu-3354 are cytoplasmic.

Interacts with USH1C and USH1G. antiparallel heterodimer with PCDH15. Isoform C1: Interacts with CAMSAP3; leading to inhibit CAMSAP3 ability to induce microtubule bundle formation. As to expression, in adult animals relatively high levels of expression are found in testis, skeletal muscle, heart, eye and thymus, and lower expression in kidney, lung and brain. Found in the sensory hair cells of the inner ear.

It localises to the cell membrane. In terms of biological role, cadherins are calcium-dependent cell adhesion proteins. They preferentially interact with themselves in a homophilic manner in connecting cells. CDH23 is required for establishing and/or maintaining the proper organization of the stereocilia bundle of hair cells in the cochlea and the vestibule during late embryonic/early postnatal development. It is part of the functional network formed by USH1C, USH1G, CDH23 and MYO7A that mediates mechanotransduction in cochlear hair cells. Required for normal hearing. The chain is Cadherin-23 (Cdh23) from Mus musculus (Mouse).